The chain runs to 152 residues: MFRGATLVNLDSKGRLAVPTRYRDGLIEDAAGQLVCTIDIHHPCLLLYPLPEWEIIEQKLSRLSSMNPVERRVQRLLLGHASECQMDNAGRLLIAPVLRQHAGLTKEVMLVGQFNKFELWDETTWYQRVKEDIDAEQSATGELSERLQDLSL.

SpoVT-AbrB domains are found at residues 5–52 (ATLV…PLPE) and 81–124 (ASEC…DETT).

It belongs to the MraZ family. As to quaternary structure, forms oligomers.

It localises to the cytoplasm. The protein resides in the nucleoid. Functionally, negatively regulates its own expression and that of the subsequent genes in the proximal part of the division and cell wall (dcw) gene cluster. Acts by binding directly to DNA. May also regulate the expression of genes outside the dcw cluster. The polypeptide is Transcriptional regulator MraZ (Klebsiella pneumoniae (strain 342)).